Consider the following 1226-residue polypeptide: Methionine synthase (1226 aa).

Residues 6–326 (RAQIEAQLKQ…EHIRHMAMAV (321 aa)) enclose the Hcy-binding domain. Zn(2+) contacts are provided by C248, C311, and C312. A Pterin-binding domain is found at 357–618 (FVNVGERTNV…VPEKLREAVE (262 aa)). The 95-residue stretch at 651–745 (SALEWRTWSV…FINASKQVGS (95 aa)) folds into the B12-binding N-terminal domain. Residues E695, 757-761 (GDVHD), H760, S805, T809, and A861 each bind methylcob(III)alamin. Residues 747–882 (NGKILLATVK…SDELRPAFVE (136 aa)) form the B12-binding domain. The AdoMet activation domain maps to 898-1226 (KKPRTKPVTL…EKWLGPNING (329 aa)). Residues D948, R1136, and 1191–1192 (YF) each bind S-adenosyl-L-methionine.

Belongs to the vitamin-B12 dependent methionine synthase family. Methylcob(III)alamin serves as cofactor. Zn(2+) is required as a cofactor.

It catalyses the reaction (6S)-5-methyl-5,6,7,8-tetrahydrofolate + L-homocysteine = (6S)-5,6,7,8-tetrahydrofolate + L-methionine. It participates in amino-acid biosynthesis; L-methionine biosynthesis via de novo pathway; L-methionine from L-homocysteine (MetH route): step 1/1. Its function is as follows. Catalyzes the transfer of a methyl group from methyl-cobalamin to homocysteine, yielding enzyme-bound cob(I)alamin and methionine. Subsequently, remethylates the cofactor using methyltetrahydrofolate. This Vibrio vulnificus (strain YJ016) protein is Methionine synthase (metH).